The sequence spans 600 residues: Albumin (600 aa).

The signal sequence occupies residues 1–10 (LLFLFSSAYS). Residues 11 to 16 (RGVFRR) constitute a propeptide that is removed on maturation. Albumin domains follow at residues 11-202 (RGVF…DELR), 203-395 (DEGK…EFQP), and 396-593 (LVEE…KFVA). Histidine 19 serves as a coordination point for Cu cation. Residue serine 21 is modified to Phosphoserine. The Ca(2+) site is built by glutamate 22 and aspartate 29. Cysteines 69 and 78 form a disulfide. 2 positions are modified to phosphoserine: serine 74 and serine 81. Histidine 83 is a binding site for Zn(2+). Disulfide bonds link cysteine 91–cysteine 107, cysteine 106–cysteine 117, cysteine 140–cysteine 185, cysteine 184–cysteine 193, cysteine 216–cysteine 262, and cysteine 261–cysteine 269. Threonine 99 is subject to Phosphothreonine. Lysine 221 carries the N6-succinyllysine modification. Lysine 256 is a binding site for (4Z,15Z)-bilirubin IXalpha. Glutamate 260 contacts Ca(2+). Residues histidine 263 and aspartate 265 each coordinate Zn(2+). Positions 265, 268, 271, and 275 each coordinate Ca(2+). Cystine bridges form between cysteine 281/cysteine 295, cysteine 294/cysteine 305, cysteine 332/cysteine 377, cysteine 376/cysteine 385, cysteine 408/cysteine 454, cysteine 453/cysteine 464, cysteine 477/cysteine 493, and cysteine 492/cysteine 503. A Phosphoserine modification is found at serine 289. Residue serine 435 is modified to Phosphoserine. Phosphothreonine is present on residues threonine 436 and threonine 438. Lysine 452 is modified (N6-succinyllysine). Serine 505 is subject to Phosphoserine. Cystine bridges form between cysteine 530–cysteine 575 and cysteine 574–cysteine 583. Position 535 is an N6-succinyllysine (lysine 535). Lysine 550 bears the N6-methyllysine mark. Position 580 is an N6-succinyllysine (lysine 580).

Belongs to the ALB/AFP/VDB family. In terms of assembly, interacts with FCGRT; this interaction regulates ALB homeostasis. Interacts with TASOR. In plasma, occurs in a covalently-linked complex with chromophore-bound alpha-1-microglobulin; this interaction does not prevent fatty acid binding to ALB. Post-translationally, phosphorylated by FAM20C in the extracellular medium. In terms of tissue distribution, plasma.

The protein resides in the secreted. Functionally, binds water, Ca(2+), Na(+), K(+), fatty acids, hormones, bilirubin and drugs. Its main function is the regulation of the colloidal osmotic pressure of blood. Major zinc transporter in plasma, typically binds about 80% of all plasma zinc. Major calcium and magnesium transporter in plasma, binds approximately 45% of circulating calcium and magnesium in plasma. Potentially has more than two calcium-binding sites and might additionally bind calcium in a non-specific manner. The shared binding site between zinc and calcium at residue Asp-265 suggests a crosstalk between zinc and calcium transport in the blood. The rank order of affinity is zinc &gt; calcium &gt; magnesium. Binds to the bacterial siderophore enterobactin and inhibits enterobactin-mediated iron uptake of E.coli from ferric transferrin, and may thereby limit the utilization of iron and growth of enteric bacteria such as E.coli. Does not prevent iron uptake by the bacterial siderophore aerobactin. In Macaca mulatta (Rhesus macaque), this protein is Albumin (ALB).